The sequence spans 318 residues: Acetaldehyde dehydrogenase 1 (318 aa).

15 to 18 is an NAD(+) binding site; it reads SGNI. The active-site Acyl-thioester intermediate is the C133. Residues 164 to 172 and N289 each bind NAD(+); that span reads SAGPGTRAN.

Belongs to the acetaldehyde dehydrogenase family.

The enzyme catalyses acetaldehyde + NAD(+) + CoA = acetyl-CoA + NADH + H(+). The sequence is that of Acetaldehyde dehydrogenase 1 (xylQ) from Azotobacter vinelandii (strain DJ / ATCC BAA-1303).